We begin with the raw amino-acid sequence, 363 residues long: Heat-inducible transcription repressor HrcA (363 aa).

Belongs to the HrcA family.

Its function is as follows. Negative regulator of class I heat shock genes (grpE-dnaK-dnaJ and groELS operons). Prevents heat-shock induction of these operons. The sequence is that of Heat-inducible transcription repressor HrcA from Afipia carboxidovorans (strain ATCC 49405 / DSM 1227 / KCTC 32145 / OM5) (Oligotropha carboxidovorans).